The primary structure comprises 338 residues: MIMKALVLEKAGKIAIQDWQSNEVLGDDDVEIKIHTVGICGSDVHYYQHGRIGPFVVDEPMVLGHEASGVITAAGKNVKHLKVGDRVCMEPGIPDLQSPQSRAGIYNLDPAVRFWATPPIDGCLRESVIHPAAFTFKLPDNVSFAQGAMVEPLAIGMQSATKAGIKPGDIGLVIGAGTIGIITQSALAGGCSDVIICDVFDEKLKVAEKYQGLHAVNSKDQQALADKVRELTGGEGVNVLFECSGAKPVIASISDHIAPGGTAVLVGMPIDPAPLDIVAAQAKEVTFKTILRYANMYPRTIRLLSSGKLNVAPLLSATYKFKDSVEAYERAAEPVRLM.

Zn(2+) is bound by residues cysteine 40, histidine 65, and glutamate 151.

This sequence belongs to the zinc-containing alcohol dehydrogenase family. In terms of assembly, homotetramer. Zn(2+) is required as a cofactor.

It catalyses the reaction xylitol + NAD(+) = D-xylulose + NADH + H(+). The polypeptide is D-xylulose reductase (Morganella morganii (Proteus morganii)).